A 268-amino-acid polypeptide reads, in one-letter code: Tryptophan synthase alpha chain (268 aa).

Residues Glu49 and Asp60 each act as proton acceptor in the active site.

Belongs to the TrpA family. Tetramer of two alpha and two beta chains.

The catalysed reaction is (1S,2R)-1-C-(indol-3-yl)glycerol 3-phosphate + L-serine = D-glyceraldehyde 3-phosphate + L-tryptophan + H2O. It participates in amino-acid biosynthesis; L-tryptophan biosynthesis; L-tryptophan from chorismate: step 5/5. The alpha subunit is responsible for the aldol cleavage of indoleglycerol phosphate to indole and glyceraldehyde 3-phosphate. This chain is Tryptophan synthase alpha chain, found in Escherichia coli O6:K15:H31 (strain 536 / UPEC).